A 726-amino-acid polypeptide reads, in one-letter code: Beta-adducin (726 aa).

Residues 1–25 (MSEETVPEAASPPPPQGQPYFDRFS) are disordered. S11 and S25 each carry phosphoserine. T55 carries the phosphothreonine; by PKA modification. Phosphoserine is present on residues S60 and S344. Positions 425-444 (KQQKEKTRWLNTPNTYLRVN) are interaction with calmodulin. Positions 525–726 (AEKSRSPSTE…KSKKKEKVES (202 aa)) are disordered. Phosphoserine is present on residues S530 and S532. The residue at position 533 (T533) is a Phosphothreonine. S535 carries the post-translational modification Phosphoserine. The span at 566–586 (EEYKKEVERKKLELDGEKETA) shows a compositional bias: basic and acidic residues. Over residues 588–606 (EEPGSPAKSAPASPVQSPA) the composition is skewed to low complexity. Residues S592, S596, S600, and S604 each carry the phosphoserine modification. T611 carries the post-translational modification Phosphothreonine. 4 positions are modified to phosphoserine: S613, S617, S619, and S621. Residues 621-631 (SLEEGTKKTET) show a composition bias toward basic and acidic residues. Positions 632-645 (SKAATTEPETTQPE) are enriched in low complexity. The segment covering 665-674 (GLSQMTTSAD) has biased composition (polar residues). Phosphothreonine is present on T675. Phosphoserine is present on residues S686, S689, S693, S697, S699, and S701. A compositionally biased stretch (low complexity) spans 689–701 (SGPMSPEGSPSKS). Residues 702–726 (PSKKKKKFRTPSFLKKSKKKEKVES) show a composition bias toward basic residues. A Phosphoserine; by PKC modification is found at S703. Residues 704–721 (KKKKKFRTPSFLKKSKKK) form an interaction with calmodulin region. The residue at position 713 (S713) is a Phosphoserine; by PKA and PKC.

This sequence belongs to the aldolase class II family. Adducin subfamily. In terms of assembly, heterodimer of an alpha and a beta subunit. Found in a complex with ADD2, DMTN and SLC2A1. Interacts with SLC2A1. In terms of processing, the N-terminus is blocked. In terms of tissue distribution, expressed mainly in brain, spleen, kidney cortex and medulla, and heart. Also expressed in human umbilical vein endothelial cells, human vascular smooth muscle cells, kidney tubular cells and K-562 cell line.

The protein localises to the cytoplasm. It localises to the cytoskeleton. It is found in the cell membrane. Its function is as follows. Membrane-cytoskeleton-associated protein that promotes the assembly of the spectrin-actin network. Binds to the erythrocyte membrane receptor SLC2A1/GLUT1 and may therefore provide a link between the spectrin cytoskeleton to the plasma membrane. Binds to calmodulin. Calmodulin binds preferentially to the beta subunit. This is Beta-adducin (ADD2) from Homo sapiens (Human).